The primary structure comprises 257 residues: Membrane protein insertase YidC 1 (257 aa).

Residues 1 to 20 (MYRKFGMAAMLVSILLLMTG) form the signal peptide. The N-palmitoyl cysteine moiety is linked to residue cysteine 21. Residue cysteine 21 is the site of S-diacylglycerol cysteine attachment. 5 consecutive transmembrane segments (helical) span residues 35 to 55 (IWDS…ANAF), 59 to 79 (FGLA…PLMI), 129 to 149 (LAGC…YHAI), 160 to 180 (FLWF…AGIT), and 205 to 225 (VMIL…WVIG).

The protein belongs to the OXA1/ALB3/YidC family. Type 2 subfamily.

The protein resides in the cell membrane. Its function is as follows. Required for the insertion and/or proper folding and/or complex formation of integral membrane proteins into the membrane. Involved in integration of membrane proteins that insert both dependently and independently of the Sec translocase complex, as well as at least some lipoproteins. This Halalkalibacterium halodurans (strain ATCC BAA-125 / DSM 18197 / FERM 7344 / JCM 9153 / C-125) (Bacillus halodurans) protein is Membrane protein insertase YidC 1.